A 307-amino-acid chain; its full sequence is Olfactory receptor 12D2 (307 aa).

Topologically, residues 1-23 (MLNTTSVTEFLLLGVTDIQELQP) are extracellular. An N-linked (GlcNAc...) asparagine glycan is attached at asparagine 3. Residues 24-44 (FLFVVFLTIYFISVTGNGAVL) traverse the membrane as a helical segment. At 45–52 (MIVISDPR) the chain is on the cytoplasmic side. A helical transmembrane segment spans residues 53–73 (LHSLMYFFLGNLSYLDICYST). The Extracellular segment spans residues 74 to 97 (VTLPKMLQNFLSTHKAISFLGCIS). Cysteine 95 and cysteine 187 are joined by a disulfide. A helical transmembrane segment spans residues 98 to 118 (QLHFFHSLGSTESMLFAVMAF). At 119–137 (DLSVAICKPLRYTVIMNPQ) the chain is on the cytoplasmic side. The chain crosses the membrane as a helical span at residues 138–158 (LCTQMAITIWVIGFFHALLHS). At 159–195 (VMTSRLNFCGSNRIHHFLCDIKPLLKLACGNTELNQW) the chain is on the extracellular side. A helical membrane pass occupies residues 196 to 215 (LLSTVTGTIAMGPFFLTLLS). Residues 216 to 236 (YFYIITYLFFKTRSCSMLCKA) are Cytoplasmic-facing. A helical transmembrane segment spans residues 237–257 (LSTCASHFMVVILFYAPVLFT). Topologically, residues 258 to 270 (YIHPALESFMDQD) are extracellular. The chain crosses the membrane as a helical span at residues 271-291 (RIVAIMYTVVTPVLNPLIYTL). Residues 292 to 307 (RNKEVKGALGRVIRRL) lie on the Cytoplasmic side of the membrane.

The protein belongs to the G-protein coupled receptor 1 family.

It localises to the cell membrane. In terms of biological role, odorant receptor. This chain is Olfactory receptor 12D2 (OR12D2), found in Homo sapiens (Human).